We begin with the raw amino-acid sequence, 242 residues long: Pyr4-family terpene cyclase mfmH (242 aa).

Transmembrane regions (helical) follow at residues 25 to 45 (VQDG…ILYI), 55 to 75 (GMPL…GAAI), 80 to 100 (AQVV…YTTW), and 116 to 136 (NLGW…WAFL). N-linked (GlcNAc...) asparagine glycosylation occurs at Asn170. 2 helical membrane-spanning segments follow: residues 175-195 (SWGI…IFVW) and 211-231 (VTIF…FVYA).

The protein belongs to the paxB family.

Its subcellular location is the membrane. The protein operates within secondary metabolite biosynthesis; terpenoid biosynthesis. Its function is as follows. Terpene cyclase; part of the gene cluster that mediates the biosynthesis of the phthalide-terpenoid hybrid 11'-O-desmethylfendlerol. Within the pathway, mfmH catalyzes the last step and cyclizes the prenyl unit of 5-O-farnesylcyclopolic acid into a drimane-like structure to yield 11'-O-desmethylfendlerol. The biosynthesis of 11'-O-desmethylfendlerol begins with the NR-PKS mfmB that forms 3,5-dimethylorsellinic acid (DMOA), which is then transformed into the phthalide 5,7-dihydroxy-4-(hydroxymethyl)-6-methylphthalide by the cytochrome P450 monooxygenase mfmA and the hydrolase mfmC. Subsequently, the methyltransferase mfmE catalyzes 7-O-methylation to yield 5-hydroxy-4-(hydroxymethyl)-7-methoxy-6-methylphthalide, which undergoes C-3 hydroxylation by the cytochrome P450 monooxygenase mfmF. The resultant cyclopolic acid (2,5-dihydroxy-4-(hydroxymethyl)-7-methoxy-6-methylphthalide) is then farnesylated by the DMATS-type prenyltransferase mfmD to afford 5-O-farnesylcyclopolic acid. Finally, the Pyr4-family terpene cyclase mfmH cyclizes the farnesyl moiety of 5-O-farnesylcyclopolic acid into a drimane-like structure, thus completing the biosynthesis of 11'-O-desmethylfendlerol. In Annulohypoxylon moriforme (Filamentous fungus), this protein is Pyr4-family terpene cyclase mfmH.